A 414-amino-acid polypeptide reads, in one-letter code: NADH-dependent flavin oxidoreductase iccE (414 aa).

FMN contacts are provided by residues 25-28 (TAIA) and Q107. 188 to 191 (HASH) provides a ligand contact to substrate. 347-348 (AR) is an FMN binding site.

Belongs to the NADH:flavin oxidoreductase/NADH oxidase family.

The enzyme catalyses 8-epi-ilicicolin H = ilicicolin H. It functions in the pathway mycotoxin biosynthesis. In terms of biological role, NADH-dependent flavin oxidoreductase; part of the gene cluster that mediates the biosynthesis of ilicicolin H, a 4-hydroxy-2-pyridonealkaloid that has potent and broad antifungal activities by inhibiting the mitochondrial respiration chain. IccE acts as an epimerase and catalyzes the conversion of 8-epi-ilicicolin H into the final product ilicicolin H. The biosynthesis of ilicicolin H starts with formation of the tetramic acid by the hybrid PKS-NRPS synthetase iccA with the partnering trans-enoyl reductase iccB since iccA lacks a designated enoylreductase (ER) domain. The cytochrome P450 monooxygenase iccC then catalyzes the ring expansion of the tetramate to the acyclic 2-pyridone. The pericyclase iccD further converts the acyclic 2-pyridone into 8-epi-ilicicolin H. Finally, the epimerase iccE converts 8-epi-ilicicolin H into ilicicolin H via epimerization. IccA to iccE are sufficient for ilicicolin H biosynthesis and the roles of the remaining enzymes, iccF, iccG and iccH within the pathway have still to be determined. This chain is NADH-dependent flavin oxidoreductase iccE, found in Talaromyces variabilis (Penicillium variabile).